The chain runs to 343 residues: Envelope glycoprotein K (343 aa).

The first 31 residues, 1-31 (MLLGGRTAYLSVLGLITAYAAFTIWYTLTAQ), serve as a signal peptide directing secretion. Residues 32-118 (LHNPCVYATV…VVGTRNCRAY (87 aa)) lie on the Extracellular side of the membrane. N-linked (GlcNAc...) asparagine; by host glycosylation is found at N57 and N89. The helical transmembrane segment at 119 to 139 (LWSVQLQMITGAWLIYIAFLC) threads the bilayer. Residues 140–213 (LRQERRLLGP…DPIGFLCEHS (74 aa)) lie on the Cytoplasmic side of the membrane. The helical transmembrane segment at 214–234 (AALALIGLEVGTHFVARLLVV) threads the bilayer. The Extracellular segment spans residues 235–251 (GTVTLVHTPCSQIYPIY). A helical transmembrane segment spans residues 252-272 (LKLASWGFVVAVTIVEIVAII). Residues 273-303 (YEKPPKTGSSANPPTPATHGVKGLCTSCCST) are Cytoplasmic-facing. The helical transmembrane segment at 304-324 (VLANLCGKLVYLLLVIGAVSI) threads the bilayer. The Extracellular portion of the chain corresponds to 325-343 (LLHYEQRIQIGLLGESFSS).

The protein belongs to the alphaherpesvirinae glycoprotein K family. As to quaternary structure, interacts (via UL20 interaction region) with protein UL20 homolog (via N-terminus); this interaction probably plays a role in the coordinate transport of protein UL20 homolog and gK to the trans-Golgi network (TGN), and is required for the cell surface expression of gK. Post-translationally, N-glycosylated.

It is found in the host cell membrane. Its subcellular location is the host endosome membrane. The protein resides in the host Golgi apparatus membrane. Functionally, glycoprotein that probably modulates membrane fusion events during secondary envelopment of cytoplasmic capsids that bud into specific trans-Golgi network (TGN)-derived membranes. The sequence is that of Envelope glycoprotein K (gK) from Equine herpesvirus 1 (strain Ab4p) (EHV-1).